A 2515-amino-acid chain; its full sequence is Probable maltase-glucoamylase 2 (2515 aa).

Residues 1–9 lie on the Cytoplasmic side of the membrane; it reads MARKLSVLE. Residues 10–30 form a helical membrane-spanning segment; the sequence is VLLIIFCLIVVTIDILLLLLV. Residues 31–482 are Lumenal-facing; that stretch reads LEETSDTSFT…DGVWIEMNEV (452 aa). A P-type 1 domain is found at 41-88; sequence PECPEIPQSERIDCTPDQEVTEDICRWQYKCCWSPVADANVPRCFFPW. 3 disulfides stabilise this stretch: C43/C72, C54/C71, and C65/C84. The interval 152 to 865 is maltase; it reads SHENINLVDG…MDKQPANFIV (714 aa). N-linked (GlcNAc...) asparagine glycosylation occurs at N167. Y371 bears the Sulfotyrosine mark. N421 carries N-linked (GlcNAc...) asparagine glycosylation. E478 acts as the Nucleophile in catalysis. E481 is a catalytic residue. Cystine bridges form between C608–C619, C916–C933, and C928–C946. N613 carries an N-linked (GlcNAc...) asparagine glycan. A P-type 2 domain is found at 904–950; that stretch reads WNLPVSDLEKFNCYPDDPTASEESCRQRGCLWEDTSTPGVPTCYYDT. Residues 1023-1766 are glucoamylase; it reads PLNTPPQPVG…GVNTYVTQVS (744 aa). Sulfotyrosine is present on Y1238. D1375 functions as the Nucleophile in the catalytic mechanism. E1378 is an active-site residue. Disordered stretches follow at residues 1816 to 1901, 1994 to 2015, and 2037 to 2091; these read TPTK…PITT, STTV…STNA, and TVPD…SSTT. The segment covering 1817 to 1831 has biased composition (polar residues); sequence PTKTSTIPMSSHPSP. Positions 1832-1901 are enriched in low complexity; sequence STTNATSSET…STNATVPITT (70 aa). A glycan (N-linked (GlcNAc...) asparagine) is linked at N2249.

This sequence belongs to the glycosyl hydrolase 31 family.

The protein resides in the membrane. It carries out the reaction Hydrolysis of terminal (1-&gt;4)-linked alpha-D-glucose residues successively from non-reducing ends of the chains with release of beta-D-glucose.. The sequence is that of Probable maltase-glucoamylase 2 from Homo sapiens (Human).